Consider the following 159-residue polypeptide: Disulfide bond formation protein B (159 aa).

Topologically, residues 1 to 8 (MQANSRAF) are cytoplasmic. The chain crosses the membrane as a helical span at residues 9 to 25 (FLLIAVIAFGLVGYALY). At 26 to 43 (LQHVEGLQPCPLCVLQRF) the chain is on the periplasmic side. C35 and C38 are joined by a disulfide. Residues 44–57 (AFVGIGVFSLLAAL) form a helical membrane-spanning segment. The Cytoplasmic segment spans residues 58–63 (SSATRL). Residues 64-81 (LWHGLGMLSGLGGIFVAG) form a helical membrane-spanning segment. The Periplasmic segment spans residues 82–136 (YHVSLLLNPKASCGIDPIENWVNALPTAKWLPQVFESDGLCTAPLPPVLGVSIPL). Cysteines 94 and 122 form a disulfide. The helical transmembrane segment at 137–155 (WSLIWMVILALTLVVAMIR) threads the bilayer. Residues 156 to 159 (RERR) lie on the Cytoplasmic side of the membrane.

The protein belongs to the DsbB family.

It localises to the cell inner membrane. Required for disulfide bond formation in some periplasmic proteins. Acts by oxidizing the DsbA protein. This chain is Disulfide bond formation protein B, found in Ralstonia nicotianae (strain ATCC BAA-1114 / GMI1000) (Ralstonia solanacearum).